The sequence spans 285 residues: Para-Rep C6 (285 aa).

One can recognise a CRESS-DNA virus Rep endonuclease domain in the interval 3–99 (TRQSTSWVFT…VAGPWEYGLF (97 aa)). An RCR-1 motif is present at residues 10-13 (VFTL). 2 residues coordinate a divalent metal cation: glutamate 36 and histidine 42. Positions 42–44 (HLQ) match the RCR-2 motif. The Nuclear localization signal signature appears at 52–74 (RNTTLRQAKYIFNGLNPHLEIAR). The active-site For DNA cleavage activity is tyrosine 82. An RCR-3 motif is present at residues 82-85 (YAMK). Aspartate 87 contributes to the a divalent metal cation binding site. Positions 99–105 (FIKRGSH) match the Nuclear localization signal motif. 175–183 (GPAGNEGKS) contacts ATP.

It belongs to the nanoviridea/circoviridae replication-associated protein family. As to quaternary structure, homooligomer (Potential). Rep binds to repeated DNA motifs (iterons). Mg(2+) is required as a cofactor. The cofactor is Mn(2+).

Its subcellular location is the host nucleus. It catalyses the reaction ATP + H2O = ADP + phosphate + H(+). In terms of biological role, initiates and terminates the replication only of its own subviral DNA molecule. The closed circular ssDNA genome is first converted to a superhelical dsDNA. Rep binds a specific hairpin at the genome origin of replication. Introduces an endonucleolytic nick within the intergenic region of the genome, thereby initiating the rolling circle replication (RCR). Following cleavage, binds covalently to the 5'-phosphate of DNA as a tyrosyl ester. The cleavage gives rise to a free 3'-OH that serves as a primer for the cellular DNA polymerase. The polymerase synthesizes the (+) strand DNA by rolling circle mechanism. After one round of replication, a Rep-catalyzed nucleotidyl transfer reaction releases a circular single-stranded virus genome, thereby terminating the replication. Displays origin-specific DNA cleavage, nucleotidyl transferase, ATPase and helicase activities. The protein is Para-Rep C6 (C6) of Subterranean clover stunt C6 alphasatellite (SCSC6A).